Consider the following 100-residue polypeptide: Urease subunit gamma (100 aa).

The protein belongs to the urease gamma subunit family. In terms of assembly, heterotrimer of UreA (gamma), UreB (beta) and UreC (alpha) subunits. Three heterotrimers associate to form the active enzyme.

The protein localises to the cytoplasm. The catalysed reaction is urea + 2 H2O + H(+) = hydrogencarbonate + 2 NH4(+). It functions in the pathway nitrogen metabolism; urea degradation; CO(2) and NH(3) from urea (urease route): step 1/1. The chain is Urease subunit gamma from Saccharopolyspora erythraea (strain ATCC 11635 / DSM 40517 / JCM 4748 / NBRC 13426 / NCIMB 8594 / NRRL 2338).